The primary structure comprises 370 residues: MSVHRDAIRGARSVVVKIGTTALTTPSGVFDRGRLHYLADAIEARMKAGSDVVIVSSGAIAAGIEPLKLTKRPADLATKQAAASVGQVALVNSWSAAFGRYDRTVGQVLLTAHDISMRVQHNNAQRTLDRLRALHAVAIVNENDTVATNEIRFGDNDRLSALVAHLVGADALILLSDIDGLYDGDPRKAPEDNPARFISEVSGPDDLADVTAGRGSHLGTGGMVSKLSSALLAADAGVPVLLAAAADAASALGDASVGTVFAPRPERMSARRFWVRYAAEASGTLTLDDGAVRAVVQQRRSLLPAGISAVSGRFFGGDVVELRDQENAMVARGVVAYDKAELATMLGRSTSDLPAEMRRPAVHADDLVAV.

Lysine 17 is an ATP binding site. Residues serine 57, aspartate 144, and asparagine 156 each contribute to the substrate site. ATP is bound by residues 176–177 (SD) and 220–226 (TGGMVSK). A PUA domain is found at 282-360 (SGTLTLDDGA…SDLPAEMRRP (79 aa)).

It belongs to the glutamate 5-kinase family.

It is found in the cytoplasm. It carries out the reaction L-glutamate + ATP = L-glutamyl 5-phosphate + ADP. The protein operates within amino-acid biosynthesis; L-proline biosynthesis; L-glutamate 5-semialdehyde from L-glutamate: step 1/2. In terms of biological role, catalyzes the transfer of a phosphate group to glutamate to form L-glutamate 5-phosphate. In Mycolicibacterium gilvum (strain PYR-GCK) (Mycobacterium gilvum (strain PYR-GCK)), this protein is Glutamate 5-kinase.